Here is a 346-residue protein sequence, read N- to C-terminus: Phosphoribosylformylglycinamidine cyclo-ligase (346 aa).

This sequence belongs to the AIR synthase family.

It localises to the cytoplasm. The catalysed reaction is 2-formamido-N(1)-(5-O-phospho-beta-D-ribosyl)acetamidine + ATP = 5-amino-1-(5-phospho-beta-D-ribosyl)imidazole + ADP + phosphate + H(+). The protein operates within purine metabolism; IMP biosynthesis via de novo pathway; 5-amino-1-(5-phospho-D-ribosyl)imidazole from N(2)-formyl-N(1)-(5-phospho-D-ribosyl)glycinamide: step 2/2. In Shewanella halifaxensis (strain HAW-EB4), this protein is Phosphoribosylformylglycinamidine cyclo-ligase.